Consider the following 354-residue polypeptide: Holliday junction branch migration complex subunit RuvB (354 aa).

A disordered region spans residues 1-38 (MSDFERTEFELPPGVGHSQNEDLNPQQTAGDSDIDTSL). Residues 2-199 (SDFERTEFEL…FGFTAQMEFY (198 aa)) are large ATPase domain (RuvB-L). The span at 17–30 (HSQNEDLNPQQTAG) shows a compositional bias: polar residues. ATP is bound by residues Leu38, Arg39, Gly80, Lys83, Thr84, Thr85, 146–148 (EDF), Arg189, Tyr199, and Arg236. Thr84 is a Mg(2+) binding site. A small ATPAse domain (RuvB-S) region spans residues 200 to 270 (DTADLTRVVT…VARAALLVFD (71 aa)). Positions 273 to 354 (ESGLDRLDRA…LEPPEGTIGL (82 aa)) are head domain (RuvB-H). DNA-binding residues include Arg328 and Arg333.

Belongs to the RuvB family. Homohexamer. Forms an RuvA(8)-RuvB(12)-Holliday junction (HJ) complex. HJ DNA is sandwiched between 2 RuvA tetramers; dsDNA enters through RuvA and exits via RuvB. An RuvB hexamer assembles on each DNA strand where it exits the tetramer. Each RuvB hexamer is contacted by two RuvA subunits (via domain III) on 2 adjacent RuvB subunits; this complex drives branch migration. In the full resolvosome a probable DNA-RuvA(4)-RuvB(12)-RuvC(2) complex forms which resolves the HJ.

It localises to the cytoplasm. The catalysed reaction is ATP + H2O = ADP + phosphate + H(+). The RuvA-RuvB-RuvC complex processes Holliday junction (HJ) DNA during genetic recombination and DNA repair, while the RuvA-RuvB complex plays an important role in the rescue of blocked DNA replication forks via replication fork reversal (RFR). RuvA specifically binds to HJ cruciform DNA, conferring on it an open structure. The RuvB hexamer acts as an ATP-dependent pump, pulling dsDNA into and through the RuvAB complex. RuvB forms 2 homohexamers on either side of HJ DNA bound by 1 or 2 RuvA tetramers; 4 subunits per hexamer contact DNA at a time. Coordinated motions by a converter formed by DNA-disengaged RuvB subunits stimulates ATP hydrolysis and nucleotide exchange. Immobilization of the converter enables RuvB to convert the ATP-contained energy into a lever motion, pulling 2 nucleotides of DNA out of the RuvA tetramer per ATP hydrolyzed, thus driving DNA branch migration. The RuvB motors rotate together with the DNA substrate, which together with the progressing nucleotide cycle form the mechanistic basis for DNA recombination by continuous HJ branch migration. Branch migration allows RuvC to scan DNA until it finds its consensus sequence, where it cleaves and resolves cruciform DNA. The protein is Holliday junction branch migration complex subunit RuvB of Corynebacterium jeikeium (strain K411).